A 484-amino-acid polypeptide reads, in one-letter code: Protein nucleotidyltransferase YdiU (484 aa).

Positions 81, 83, 84, 103, 115, 116, 166, and 173 each coordinate ATP. The active-site Proton acceptor is the Asp-244. Residues Asn-245 and Asp-254 each contribute to the Mg(2+) site. Asp-254 is an ATP binding site.

Belongs to the SELO family. Mg(2+) is required as a cofactor. Mn(2+) serves as cofactor.

It catalyses the reaction L-seryl-[protein] + ATP = 3-O-(5'-adenylyl)-L-seryl-[protein] + diphosphate. The catalysed reaction is L-threonyl-[protein] + ATP = 3-O-(5'-adenylyl)-L-threonyl-[protein] + diphosphate. The enzyme catalyses L-tyrosyl-[protein] + ATP = O-(5'-adenylyl)-L-tyrosyl-[protein] + diphosphate. It carries out the reaction L-histidyl-[protein] + UTP = N(tele)-(5'-uridylyl)-L-histidyl-[protein] + diphosphate. It catalyses the reaction L-seryl-[protein] + UTP = O-(5'-uridylyl)-L-seryl-[protein] + diphosphate. The catalysed reaction is L-tyrosyl-[protein] + UTP = O-(5'-uridylyl)-L-tyrosyl-[protein] + diphosphate. Nucleotidyltransferase involved in the post-translational modification of proteins. It can catalyze the addition of adenosine monophosphate (AMP) or uridine monophosphate (UMP) to a protein, resulting in modifications known as AMPylation and UMPylation. This chain is Protein nucleotidyltransferase YdiU, found in Shewanella sp. (strain MR-7).